Reading from the N-terminus, the 209-residue chain is Virulence factors putative positive transcription regulator BvgA (209 aa).

The 116-residue stretch at 4 to 119 folds into the Response regulatory domain; the sequence is KVLIIDDHPV…EVINAAKAVM (116 aa). The residue at position 54 (aspartate 54) is a 4-aspartylphosphate. In terms of domain architecture, HTH luxR-type spans 142 to 207; it reads DSTLISVLSN…ELIDLAKRNN (66 aa). Residues 166–185 constitute a DNA-binding region (H-T-H motif); it reads NKDIADSMFLSNKTVSTYKT.

Homodimer. In terms of processing, phosphorylated by BvgS.

Functionally, member of the two-component regulatory system BvgS/BvgA. Activates the transcription of virulence genes. The polypeptide is Virulence factors putative positive transcription regulator BvgA (bvgA) (Bordetella bronchiseptica (strain ATCC BAA-588 / NCTC 13252 / RB50) (Alcaligenes bronchisepticus)).